Consider the following 616-residue polypeptide: Dihydroxy-acid dehydratase (616 aa).

Asp-81 is a Mg(2+) binding site. Cys-122 serves as a coordination point for [2Fe-2S] cluster. Positions 123 and 124 each coordinate Mg(2+). Position 124 is an N6-carboxylysine (Lys-124). Cys-195 lines the [2Fe-2S] cluster pocket. Residue Glu-491 coordinates Mg(2+). Ser-517 functions as the Proton acceptor in the catalytic mechanism.

It belongs to the IlvD/Edd family. Homodimer. It depends on [2Fe-2S] cluster as a cofactor. Mg(2+) serves as cofactor.

It carries out the reaction (2R)-2,3-dihydroxy-3-methylbutanoate = 3-methyl-2-oxobutanoate + H2O. It catalyses the reaction (2R,3R)-2,3-dihydroxy-3-methylpentanoate = (S)-3-methyl-2-oxopentanoate + H2O. Its pathway is amino-acid biosynthesis; L-isoleucine biosynthesis; L-isoleucine from 2-oxobutanoate: step 3/4. It functions in the pathway amino-acid biosynthesis; L-valine biosynthesis; L-valine from pyruvate: step 3/4. Functions in the biosynthesis of branched-chain amino acids. Catalyzes the dehydration of (2R,3R)-2,3-dihydroxy-3-methylpentanoate (2,3-dihydroxy-3-methylvalerate) into 2-oxo-3-methylpentanoate (2-oxo-3-methylvalerate) and of (2R)-2,3-dihydroxy-3-methylbutanoate (2,3-dihydroxyisovalerate) into 2-oxo-3-methylbutanoate (2-oxoisovalerate), the penultimate precursor to L-isoleucine and L-valine, respectively. This chain is Dihydroxy-acid dehydratase, found in Azoarcus sp. (strain BH72).